The sequence spans 288 residues: Leucine-rich repeat-containing protein 72 (288 aa).

4 LRR repeats span residues 47–68 (DVFE…SRFK), 69–90 (KLKY…TRNY), 91–112 (CLAE…HYLP), and 113–134 (SLHI…VKEL). Residues 148 to 186 (NPLCQYNLYRLYIIYHLPGVELLDRNQVTEKERRSMITL) enclose the LRRCT domain.

This Bos taurus (Bovine) protein is Leucine-rich repeat-containing protein 72 (LRRC72).